The sequence spans 90 residues: Large ribosomal subunit protein bL27 (90 aa).

The disordered stretch occupies residues 1-22; sequence MAHKKAGGSSRNGRDSESKRLG.

Belongs to the bacterial ribosomal protein bL27 family.

The polypeptide is Large ribosomal subunit protein bL27 (Allorhizobium ampelinum (strain ATCC BAA-846 / DSM 112012 / S4) (Agrobacterium vitis (strain S4))).